Reading from the N-terminus, the 381-residue chain is Succinyl-diaminopimelate desuccinylase (381 aa).

H68 serves as a coordination point for Zn(2+). Residue D70 is part of the active site. D101 contacts Zn(2+). E135 serves as the catalytic Proton acceptor. The Zn(2+) site is built by E136, E164, and H350.

This sequence belongs to the peptidase M20A family. DapE subfamily. Homodimer. The cofactor is Zn(2+). Co(2+) serves as cofactor.

It carries out the reaction N-succinyl-(2S,6S)-2,6-diaminopimelate + H2O = (2S,6S)-2,6-diaminopimelate + succinate. The protein operates within amino-acid biosynthesis; L-lysine biosynthesis via DAP pathway; LL-2,6-diaminopimelate from (S)-tetrahydrodipicolinate (succinylase route): step 3/3. In terms of biological role, catalyzes the hydrolysis of N-succinyl-L,L-diaminopimelic acid (SDAP), forming succinate and LL-2,6-diaminopimelate (DAP), an intermediate involved in the bacterial biosynthesis of lysine and meso-diaminopimelic acid, an essential component of bacterial cell walls. The chain is Succinyl-diaminopimelate desuccinylase from Neisseria meningitidis serogroup C (strain 053442).